A 1178-amino-acid chain; its full sequence is Pyruvate carboxylase, mitochondrial (1178 aa).

The N-terminal 20 residues, 1 to 20 (MLKFRTVHGGLRLLGIRRTS), are a transit peptide targeting the mitochondrion. N6-acetyllysine occurs at positions 35 and 39. Positions 36 to 486 (PIKKVMVANR…DTQFIDENPE (451 aa)) constitute a Biotin carboxylation domain. Lys-79 bears the N6-acetyllysine; alternate mark. The residue at position 79 (Lys-79) is an N6-succinyllysine; alternate. Lys-148 and Lys-152 each carry N6-acetyllysine. 2 residues coordinate ATP: Lys-152 and Glu-236. Residues 156–353 (RAIAIAAGVP…LVHAQIHVAE (198 aa)) form the ATP-grasp domain. The residue at position 241 (Lys-241) is an N6-acetyllysine. His-271 provides a ligand contact to ATP. N6-acetyllysine is present on residues Lys-297 and Lys-319. Residue Arg-328 is part of the active site. At Lys-434 the chain carries N6-acetyllysine. At Lys-442 the chain carries N6-succinyllysine. The Pyruvate carboxyltransferase domain maps to 563–832 (LLLMDTTFRD…DTEVPMERVF (270 aa)). 571-575 (RDAHQ) is a binding site for substrate. Asp-572 is a Mn(2+) binding site. The residue at position 589 (Lys-589) is an N6-acetyllysine. Substrate is bound at residue Arg-644. 2 positions are modified to N6-acetyllysine: Lys-661 and Lys-717. Lys-741 is a binding site for Mn(2+). Lys-741 is modified (N6-carboxylysine). N6-acetyllysine is present on Lys-748. His-771 and His-773 together coordinate Mn(2+). Lys-892 carries the post-translational modification N6-acetyllysine. Thr-908 contributes to the substrate binding site. N6-acetyllysine is present on residues Lys-969 and Lys-992. The residue at position 1003 (Thr-1003) is a Phosphothreonine. N6-acetyllysine occurs at positions 1061, 1090, and 1124. Residues 1109–1178 (KGQIGAPMPG…EGDDLILEIE (70 aa)) form the Biotinyl-binding domain. Residue Lys-1144 is modified to N6-biotinyllysine.

Homotetramer. Interacts (via the biotin carboxylation domain) with SIRT4. Biotin serves as cofactor. The cofactor is Mn(2+). Post-translationally, acetylation of Lys-748 might play a role in catalytic activity regulation.

The protein localises to the mitochondrion matrix. The catalysed reaction is hydrogencarbonate + pyruvate + ATP = oxaloacetate + ADP + phosphate + H(+). It participates in carbohydrate biosynthesis; gluconeogenesis. In terms of biological role, pyruvate carboxylase catalyzes a 2-step reaction, involving the ATP-dependent carboxylation of the covalently attached biotin in the first step and the transfer of the carboxyl group to pyruvate in the second. Catalyzes in a tissue specific manner, the initial reactions of glucose (liver, kidney) and lipid (adipose tissue, liver, brain) synthesis from pyruvate. This Homo sapiens (Human) protein is Pyruvate carboxylase, mitochondrial.